A 467-amino-acid chain; its full sequence is tRNA(Ile)-lysidine synthase (467 aa).

35-40 (SGGPDS) provides a ligand contact to ATP.

The protein belongs to the tRNA(Ile)-lysidine synthase family.

Its subcellular location is the cytoplasm. It catalyses the reaction cytidine(34) in tRNA(Ile2) + L-lysine + ATP = lysidine(34) in tRNA(Ile2) + AMP + diphosphate + H(+). In terms of biological role, ligates lysine onto the cytidine present at position 34 of the AUA codon-specific tRNA(Ile) that contains the anticodon CAU, in an ATP-dependent manner. Cytidine is converted to lysidine, thus changing the amino acid specificity of the tRNA from methionine to isoleucine. This is tRNA(Ile)-lysidine synthase from Caldanaerobacter subterraneus subsp. tengcongensis (strain DSM 15242 / JCM 11007 / NBRC 100824 / MB4) (Thermoanaerobacter tengcongensis).